Consider the following 434-residue polypeptide: Enolase (434 aa).

A (2R)-2-phosphoglycerate-binding site is contributed by Gln-165. The active-site Proton donor is Glu-207. Mg(2+) is bound by residues Asp-244, Glu-291, and Asp-318. The (2R)-2-phosphoglycerate site is built by Lys-343, Arg-372, Ser-373, and Lys-394. The active-site Proton acceptor is Lys-343.

This sequence belongs to the enolase family. Mg(2+) is required as a cofactor.

Its subcellular location is the cytoplasm. The protein resides in the secreted. The protein localises to the cell surface. The catalysed reaction is (2R)-2-phosphoglycerate = phosphoenolpyruvate + H2O. It participates in carbohydrate degradation; glycolysis; pyruvate from D-glyceraldehyde 3-phosphate: step 4/5. Its function is as follows. Catalyzes the reversible conversion of 2-phosphoglycerate (2-PG) into phosphoenolpyruvate (PEP). It is essential for the degradation of carbohydrates via glycolysis. The sequence is that of Enolase from Staphylococcus saprophyticus subsp. saprophyticus (strain ATCC 15305 / DSM 20229 / NCIMB 8711 / NCTC 7292 / S-41).